A 664-amino-acid polypeptide reads, in one-letter code: Zinc finger protein 710 (664 aa).

Residues Lys110 and Lys113 each participate in a glycyl lysine isopeptide (Lys-Gly) (interchain with G-Cter in SUMO2) cross-link. Residues 121-141 (VYEVSVPGDDKDAGPAEAPAE) are disordered. 3 C2H2-type zinc fingers span residues 295-317 (WQCRMCEKSYTSKYNLVTHILGH), 323-345 (HSCPHCSKLFKQPSHLQTHLLTH), and 351-373 (HKCQVCHKAFTQTSHLKRHMLLH). A Glycyl lysine isopeptide (Lys-Gly) (interchain with G-Cter in SUMO2) cross-link involves residue Lys377. 8 C2H2-type zinc fingers span residues 379–401 (YSCHFCGRGFAYPSELKAHEVKH), 407–429 (HVCVECGLDFSTLTQLKRHLASH), 435–457 (YQCLECDKSFHYRSQLQNHMLKH), 463–485 (FVCTECGMEFSQIHHLKQHSLTH), 491–513 (FKCEVCGREFTLQANMKRHMLIH), 519–541 (YQCHICFKTFVQKQTLKTHMIVH), 547–569 (FKCKVCGKSFNRMYNLLGHMHLH), and 575–598 (FKCPYCSSKFNLKGNLSRHMKVKH).

This sequence belongs to the krueppel C2H2-type zinc-finger protein family.

It localises to the nucleus. In terms of biological role, may be involved in transcriptional regulation. This chain is Zinc finger protein 710 (ZNF710), found in Homo sapiens (Human).